Reading from the N-terminus, the 91-residue chain is Small ribosomal subunit protein bS20 (91 aa).

The tract at residues 1–28 is disordered; the sequence is MANTASAEKRNRQAQKRRARNVQVRTGV.

The protein belongs to the bacterial ribosomal protein bS20 family.

Binds directly to 16S ribosomal RNA. The chain is Small ribosomal subunit protein bS20 from Anaeromyxobacter dehalogenans (strain 2CP-1 / ATCC BAA-258).